The following is a 63-amino-acid chain: uncharacterized protein (63 aa).

The next 2 membrane-spanning stretches (helical) occupy residues 3–23 (VFLI…VYYI) and 42–62 (ALVC…TKLL).

Its subcellular location is the cell membrane. This is an uncharacterized protein from Bacillus subtilis (strain 168).